A 255-amino-acid chain; its full sequence is Thiazole synthase (255 aa).

The active-site Schiff-base intermediate with DXP is the lysine 97. 1-deoxy-D-xylulose 5-phosphate is bound by residues glycine 158, 184-185 (AG), and 206-207 (NT).

This sequence belongs to the ThiG family. Homotetramer. Forms heterodimers with either ThiH or ThiS.

It is found in the cytoplasm. The enzyme catalyses [ThiS sulfur-carrier protein]-C-terminal-Gly-aminoethanethioate + 2-iminoacetate + 1-deoxy-D-xylulose 5-phosphate = [ThiS sulfur-carrier protein]-C-terminal Gly-Gly + 2-[(2R,5Z)-2-carboxy-4-methylthiazol-5(2H)-ylidene]ethyl phosphate + 2 H2O + H(+). The protein operates within cofactor biosynthesis; thiamine diphosphate biosynthesis. Its function is as follows. Catalyzes the rearrangement of 1-deoxy-D-xylulose 5-phosphate (DXP) to produce the thiazole phosphate moiety of thiamine. Sulfur is provided by the thiocarboxylate moiety of the carrier protein ThiS. In vitro, sulfur can be provided by H(2)S. The protein is Thiazole synthase of Moorella thermoacetica (strain ATCC 39073 / JCM 9320).